Consider the following 476-residue polypeptide: Proton-coupled amino acid transporter 1 (476 aa).

The span at 1-15 (MSTQRLRNEDYHDYS) shows a compositional bias: basic and acidic residues. Residues 1–32 (MSTQRLRNEDYHDYSSTDVSPEESPSEGLNNL) are disordered. Over 1–51 (MSTQRLRNEDYHDYSSTDVSPEESPSEGLNNLSSPGSYQRFGQSNSTTWFQ) the chain is Cytoplasmic. A helical membrane pass occupies residues 52 to 72 (TLIHLLKGNIGTGLLGLPLAV). Residues 73-78 (KNAGIV) are Extracellular-facing. Residues 79–99 (MGPISLLIIGIVAVHCMGILV) traverse the membrane as a helical segment. Topologically, residues 100-141 (KCAHHFCRRLNKSFVDYGDTVMYGLESSPCSWLRNHAHWGRR) are cytoplasmic. The helical transmembrane segment at 142-162 (VVDFFLIVTQLGFCCVYFVFL) threads the bilayer. At 163-190 (ADNFKQVIEAANGTTNNCHNNETVILTP) the chain is on the extracellular side. Asparagine 174 and asparagine 183 each carry an N-linked (GlcNAc...) asparagine glycan. Cysteine 180 and cysteine 329 form a disulfide bridge. A helical transmembrane segment spans residues 191–211 (TMDSRLYMLSFLPFLVLLVFI). The Cytoplasmic portion of the chain corresponds to 212 to 215 (RNLR). The helical transmembrane segment at 216 to 236 (ALSIFSLLANITMLVSLVMIY) threads the bilayer. The Extracellular portion of the chain corresponds to 237–257 (QFIVQRIPDPSHLPLVAPWKT). The helical transmembrane segment at 258 to 278 (YPLFFGTAIFSFEGIGMVLPL) threads the bilayer. The Cytoplasmic segment spans residues 279 to 289 (ENKMKDPRKFP). A helical transmembrane segment spans residues 290 to 310 (LILYLGMVIVTILYISLGCLG). Residues 311–342 (YLQFGANIQGSITLNLPNCWLYQSVKLLYSIG) lie on the Extracellular side of the membrane. Residues 343–363 (IFFTYALQFYVPAEIIIPFFV) traverse the membrane as a helical segment. Residues 364–372 (SRAPEHCEL) lie on the Cytoplasmic side of the membrane. Residues 373 to 393 (VVDLFVRTVLVCLTCILAILI) form a helical membrane-spanning segment. The Extracellular segment spans residues 394–397 (PRLD). The helical transmembrane segment at 398 to 418 (LVISLVGSVSSSALALIIPPL) threads the bilayer. Residues 419–439 (LEVTTFYSEGMSPLTIFKDAL) lie on the Cytoplasmic side of the membrane. Residues 440 to 460 (ISILGFVGFVVGTYEALYELI) form a helical membrane-spanning segment. At 461–476 (QPSNAPIFINSTCAFI) the chain is on the extracellular side. Asparagine 470 carries N-linked (GlcNAc...) asparagine glycosylation.

The protein belongs to the amino acid/polyamine transporter 2 family.

It is found in the cell membrane. It localises to the apical cell membrane. The protein resides in the lysosome membrane. The enzyme catalyses glycine(in) + H(+)(in) = glycine(out) + H(+)(out). The catalysed reaction is L-alanine(in) + H(+)(in) = L-alanine(out) + H(+)(out). It carries out the reaction D-alanine(in) + H(+)(in) = D-alanine(out) + H(+)(out). It catalyses the reaction L-proline(out) + H(+)(out) = L-proline(in) + H(+)(in). The enzyme catalyses D-proline(out) + H(+)(out) = D-proline(in) + H(+)(in). The catalysed reaction is D-serine(out) + H(+)(out) = D-serine(in) + H(+)(in). It carries out the reaction L-serine(in) + H(+)(in) = L-serine(out) + H(+)(out). It catalyses the reaction 4-aminobutanoate(in) + H(+)(in) = 4-aminobutanoate(out) + H(+)(out). The enzyme catalyses beta-alanine(in) + H(+)(in) = beta-alanine(out) + H(+)(out). In terms of biological role, electrogenic proton/amino acid symporter with selectivity for small apolar L-amino acids, their D-enantiomers and selected amino acid derivatives such as 4-aminobutanoate/GABA. May be involved in the efflux from the lysosomal compartment of neutral amino acids resulting from proteolysis. May play a role in specifying sites for exocytosis in neurons. The sequence is that of Proton-coupled amino acid transporter 1 from Homo sapiens (Human).